A 248-amino-acid polypeptide reads, in one-letter code: DNA repair protein RecO (248 aa).

The protein belongs to the RecO family.

Functionally, involved in DNA repair and RecF pathway recombination. In Streptomyces avermitilis (strain ATCC 31267 / DSM 46492 / JCM 5070 / NBRC 14893 / NCIMB 12804 / NRRL 8165 / MA-4680), this protein is DNA repair protein RecO.